A 318-amino-acid chain; its full sequence is Olfactory receptor 2A2 (318 aa).

The Extracellular segment spans residues 1-24 (MEGNQTWITDITLLGFQVGPALAI). An N-linked (GlcNAc...) asparagine glycan is attached at Asn4. The helical transmembrane segment at 25 to 48 (LLCGLFSVFYTLTLLGNGVIFGII) threads the bilayer. The Cytoplasmic segment spans residues 49 to 56 (CLDSKLHT). A helical transmembrane segment spans residues 57 to 78 (PMYFFLSHLAIIDMSYASNNVP). At 79 to 99 (KMLANLMNQKRTISFVPCIMQ) the chain is on the extracellular side. A helical transmembrane segment spans residues 100–119 (TFLYLAFAVTECLILVVMSY). Over 120-138 (DRYVAICHPFQYTVIMSWR) the chain is Cytoplasmic. The helical transmembrane segment at 139–157 (VCTILVLTSWSCGFALSLV) threads the bilayer. Residues 158–194 (HEILLLRLPFCGPRDVNHLFCEILSVLKLACADTWVN) lie on the Extracellular side of the membrane. Residues 195–218 (QVVIFATCVFVLVGPLSLILVSYM) form a helical membrane-spanning segment. Over 219–235 (HILGAILKIQTKEGRIK) the chain is Cytoplasmic. A helical membrane pass occupies residues 236–258 (AFSTCSSHLCVVGLFFGIAMVVY). The Extracellular portion of the chain corresponds to 259–271 (MVPDSNQREEQEK). The helical transmembrane segment at 272 to 291 (MLSLFHSVFNPMLNPLIYSL) threads the bilayer. Topologically, residues 292–310 (RNAQLKGALHRALQRKRSM) are cytoplasmic.

It belongs to the G-protein coupled receptor 1 family.

It localises to the cell membrane. Odorant receptor. This Homo sapiens (Human) protein is Olfactory receptor 2A2 (OR2A2).